We begin with the raw amino-acid sequence, 586 residues long: Adenine deaminase (586 aa).

This sequence belongs to the metallo-dependent hydrolases superfamily. Adenine deaminase family. The cofactor is Mn(2+).

It carries out the reaction adenine + H2O + H(+) = hypoxanthine + NH4(+). The chain is Adenine deaminase from Bdellovibrio bacteriovorus (strain ATCC 15356 / DSM 50701 / NCIMB 9529 / HD100).